A 250-amino-acid chain; its full sequence is Myelin basic protein (250 aa).

Over residues 1-28 (MGNHSGKRELSAEKASKDGEIHRGEAGK) the composition is skewed to basic and acidic residues. Residues 1–150 (MGNHSGKREL…SQRSKYLATA (150 aa)) form a disordered region. Gly-2 is subject to N-acetylalanine. 2 positions are modified to phosphoserine: Ser-31 and Ser-40. Over residues 95–113 (FSRDAPGREDNTFKDRPSE) the composition is skewed to basic and acidic residues. Position 96 is a phosphothreonine (Ser-96). Glu-113 is modified (phosphoserine). Position 122 is a phosphothreonine (Glu-122). Thr-125 is subject to Phosphotyrosine. Ala-135, Arg-139, Ser-141, and Ser-144 each carry phosphoserine. A phosphotyrosine mark is found at Tyr-146 and Leu-147. Thr-149 carries the phosphothreonine modification. Ser-151 bears the Phosphoserine mark. Ser-151 is modified (phosphotyrosine). Thr-152 bears the Phosphothreonine mark. Citrulline occurs at positions 157 and 163. Thr-167 is modified (phosphothreonine). Position 172 is a phosphoserine (Ser-172). Residues Arg-175 and Arg-181 each carry the omega-N-methylarginine modification. The interval 175–250 (RFFSGDRGAP…SRSGSPMARR (76 aa)) is disordered. Ser-188 carries the post-translational modification Phosphoserine. Phosphothreonine is present on Thr-197. Over residues 197–206 (THYGSLPQKS) the composition is skewed to polar residues. Tyr-199 is modified (phosphotyrosine). Ser-206 carries the phosphoserine modification. Phosphothreonine is present on residues Thr-211, Thr-226, and Thr-229. Gln-234 is subject to Deamidated glutamine. Arg-239 is subject to Citrulline. A Phosphoserine modification is found at Ser-241. A Phosphoserine; by UHMK1 modification is found at Ser-245. Arg-250 carries the citrulline modification.

Belongs to the myelin basic protein family. In terms of assembly, homodimer. Post-translationally, as in other animals, several charge isomers may be produced as a result of optional post-translational modifications, such as phosphorylation of serine or threonine residues, deamidation of glutamine or asparagine residues, citrullination and methylation of arginine residues. Methylated on arginine residues; decreases with the age of the animal, making MBP more cationic. In terms of processing, phosphorylated by TAOK2, VRK2, MAPK11, MAPK12, MAPK14 and MINK1. Post-translationally, proteolytically cleaved in B cell lysosomes by cathepsin CTSG which degrades the major immunogenic MBP epitope and prevents the activation of MBP-specific autoreactive T cells. In terms of tissue distribution, in the embryo, isoform 1-isoform 3 are found in neurons within the central nervous system (primarily in pioneer neurons important in the formation of the cortex) and the peripheral nervous system. They are also expressed in the thymus, gut, lung and kidney. In the adult, isoform 1-isoform 3 are highly expressed in the brain (mainly in brain regions rich in oligodendrocytes) and spleen. Lower levels are seen in the heart, kidney and lung. Isoform 2 is also found in cells of the immune system. The isoforms missing the 134 first amino acids (isoform 4-isoform 13) are almost exclusively produced in the myelin-forming cells, the mature oligodendrocytes.

It is found in the myelin membrane. The protein localises to the cytoplasm. The protein resides in the nucleus. In terms of biological role, the classic group of MBP isoforms (isoform 4-isoform 13) are with PLP the most abundant protein components of the myelin membrane in the CNS. They have a role in both its formation and stabilization. The non-classic group of MBP isoforms (isoform 1-isoform 3/Golli-MBPs) may preferentially have a role in the early developing brain long before myelination, maybe as components of transcriptional complexes, and may also be involved in signaling pathways in T-cells and neural cells. Differential splicing events combined to optional post-translational modifications give a wide spectrum of isomers, with each of them potentially having a specialized function. In Mus musculus (Mouse), this protein is Myelin basic protein (Mbp).